The sequence spans 514 residues: 3-octaprenyl-4-hydroxybenzoate carboxy-lyase (514 aa).

N177 is a Mn(2+) binding site. Residues 180 to 182 (IYR), 194 to 196 (RWL), and 199 to 200 (RG) each bind prenylated FMN. Mn(2+) is bound at residue E243. The active-site Proton donor is the D314.

This sequence belongs to the UbiD family. In terms of assembly, homohexamer. Requires prenylated FMN as cofactor. The cofactor is Mn(2+).

It localises to the cell membrane. It catalyses the reaction a 4-hydroxy-3-(all-trans-polyprenyl)benzoate + H(+) = a 2-(all-trans-polyprenyl)phenol + CO2. The protein operates within cofactor biosynthesis; ubiquinone biosynthesis. Its function is as follows. Catalyzes the decarboxylation of 3-octaprenyl-4-hydroxy benzoate to 2-octaprenylphenol, an intermediate step in ubiquinone biosynthesis. This chain is 3-octaprenyl-4-hydroxybenzoate carboxy-lyase, found in Bordetella pertussis (strain Tohama I / ATCC BAA-589 / NCTC 13251).